A 365-amino-acid chain; its full sequence is Mannitol dehydrogenase (365 aa).

Zn(2+) contacts are provided by cysteine 50, histidine 72, cysteine 103, cysteine 106, cysteine 109, cysteine 117, and cysteine 166.

The protein belongs to the zinc-containing alcohol dehydrogenase family. Zn(2+) is required as a cofactor.

The protein resides in the cytoplasm. It carries out the reaction D-mannitol + NAD(+) = D-mannose + NADH + H(+). Its function is as follows. Oxidizes mannitol to mannose. Provides the initial step by which translocated mannitol is committed to central metabolism and, by regulating mannitol pool size, is important in regulating salt tolerance at the cellular level. This is Mannitol dehydrogenase (MTD) from Apium graveolens (Celery).